A 262-amino-acid chain; its full sequence is tRNA pseudouridine synthase A (262 aa).

Asp-51 functions as the Nucleophile in the catalytic mechanism. Residue Tyr-109 participates in substrate binding.

Belongs to the tRNA pseudouridine synthase TruA family. In terms of assembly, homodimer.

It catalyses the reaction uridine(38/39/40) in tRNA = pseudouridine(38/39/40) in tRNA. In terms of biological role, formation of pseudouridine at positions 38, 39 and 40 in the anticodon stem and loop of transfer RNAs. The protein is tRNA pseudouridine synthase A of Glaesserella parasuis serovar 5 (strain SH0165) (Haemophilus parasuis).